Here is a 151-residue protein sequence, read N- to C-terminus: Glycosylation-dependent cell adhesion molecule 1 (151 aa).

An N-terminal signal peptide occupies residues 1 to 19 (MKFFTVLLFVSLAATSLAL). Residues 29–123 (MKTQPTDAIP…ENLTKSSQTV (95 aa)) are disordered. Residues 42–52 (STPTSYTSEES) are compositionally biased toward low complexity. The span at 53-71 (TSSKDLSKEPSIFREELIS) shows a compositional bias: basic and acidic residues. Phosphoserine occurs at positions 54, 59, 63, and 71. Positions 103-114 (RPTTSAATTSEE) are enriched in low complexity. A glycan (N-linked (GlcNAc...) asparagine) is linked at asparagine 115.

It belongs to the PP3/GlyCAM-1 family. Post-translationally, extensively O-glycosylated. Lymph nodes. Associated with the lumenal surface of the high endothelial venules of peripheral lymph nodes.

It is found in the cell membrane. Adhesion molecule that accomplishes cell binding by presenting carbohydrate(s) to the lectin domain of L-selectin. This Mus musculus (Mouse) protein is Glycosylation-dependent cell adhesion molecule 1 (Glycam1).